Reading from the N-terminus, the 744-residue chain is 1,4-alpha-glucan branching enzyme GlgB (744 aa).

Positions 1–23 (MSGPEDPADRRHGEVPAPRRDIP) are disordered. The segment covering 7 to 23 (PADRRHGEVPAPRRDIP) has biased composition (basic and acidic residues). The active-site Nucleophile is D424. The Proton donor role is filled by E476.

The protein belongs to the glycosyl hydrolase 13 family. GlgB subfamily. In terms of assembly, monomer.

The catalysed reaction is Transfers a segment of a (1-&gt;4)-alpha-D-glucan chain to a primary hydroxy group in a similar glucan chain.. It functions in the pathway glycan biosynthesis; glycogen biosynthesis. Catalyzes the formation of the alpha-1,6-glucosidic linkages in glycogen by scission of a 1,4-alpha-linked oligosaccharide from growing alpha-1,4-glucan chains and the subsequent attachment of the oligosaccharide to the alpha-1,6 position. This is 1,4-alpha-glucan branching enzyme GlgB from Nocardia farcinica (strain IFM 10152).